Reading from the N-terminus, the 283-residue chain is Isochorismatase domain-containing protein 1 (283 aa).

This sequence belongs to the isochorismatase family.

The protein is Isochorismatase domain-containing protein 1 (isoc1) of Salmo salar (Atlantic salmon).